The primary structure comprises 166 residues: Mitochondrial fission process protein 1 (166 aa).

The next 2 helical transmembrane spans lie at 34-54 (SLVPAAVVWLSYGVASSYVLA) and 80-100 (AVVDTFVWQALASVAIPGFTI). Residue Lys123 is modified to N6-succinyllysine. The helical transmembrane segment at 129 to 149 (LGLLTIPIIIHPIDRSVDFLL) threads the bilayer.

The protein belongs to the MTFP1 family.

Its subcellular location is the mitochondrion inner membrane. Functionally, involved in the mitochondrial division probably by regulating membrane fission. Loss-of-function induces the release of cytochrome c, which activates the caspase cascade and leads to apoptosis. This is Mitochondrial fission process protein 1 (MTFP1) from Homo sapiens (Human).